A 545-amino-acid chain; its full sequence is CTP synthase (545 aa).

Residues 1-266 (MTTNYIFVTG…DDYICKRFSL (266 aa)) are amidoligase domain. Residue Ser14 participates in CTP binding. Residue Ser14 coordinates UTP. ATP is bound by residues 15 to 20 (SLGKGI) and Asp72. Mg(2+) is bound by residues Asp72 and Glu140. CTP-binding positions include 147-149 (DIE), 187-192 (KTKPTQ), and Lys223. UTP-binding positions include 187–192 (KTKPTQ) and Lys223. 239–241 (KDV) contacts ATP. The Glutamine amidotransferase type-1 domain occupies 291 to 542 (TIGMVGKYIE…VKAASEFQKR (252 aa)). Position 352 (Gly352) interacts with L-glutamine. The active-site Nucleophile; for glutamine hydrolysis is the Cys379. L-glutamine-binding positions include 380–383 (LGMQ), Glu403, and Arg470. Residues His515 and Glu517 contribute to the active site.

It belongs to the CTP synthase family. Homotetramer.

It carries out the reaction UTP + L-glutamine + ATP + H2O = CTP + L-glutamate + ADP + phosphate + 2 H(+). The catalysed reaction is L-glutamine + H2O = L-glutamate + NH4(+). It catalyses the reaction UTP + NH4(+) + ATP = CTP + ADP + phosphate + 2 H(+). Its pathway is pyrimidine metabolism; CTP biosynthesis via de novo pathway; CTP from UDP: step 2/2. With respect to regulation, allosterically activated by GTP, when glutamine is the substrate; GTP has no effect on the reaction when ammonia is the substrate. The allosteric effector GTP functions by stabilizing the protein conformation that binds the tetrahedral intermediate(s) formed during glutamine hydrolysis. Inhibited by the product CTP, via allosteric rather than competitive inhibition. In terms of biological role, catalyzes the ATP-dependent amination of UTP to CTP with either L-glutamine or ammonia as the source of nitrogen. Regulates intracellular CTP levels through interactions with the four ribonucleotide triphosphates. In Shigella boydii serotype 18 (strain CDC 3083-94 / BS512), this protein is CTP synthase.